Reading from the N-terminus, the 529-residue chain is MKKIMLVFITLILISLPIAQQTEAKDASAFNKENSISSMAPPASPPASPKTPIEKKHADEIDKYIQGLDYNKNNVLVYHGDAVTNVPPRKGYKDGNEYIVVEKKKKSINQNNADIQVVNAISSLTYPGALVKANSELVENQPDVLPVKRDSLTLSIDLPGMTNQDNKIVVKNATKSNVNNAVNTLVERWNEKYAQAYPNVSAKIDYDDEMAYSESQLIAKFGTAFKAVNNSLNVNFGAISEGKMQEEVISFKQIYYNVNVNEPTRPSRFFGKAVTKEQLQALGVNAENPPAYISSVAYGRQVYLKLSTNSHSTKVKAAFDAAVSGKSVSGDVELTNIIKNSSFKAVIYGGSAKDEVQIIDGNLGDLRDILKKGATFNRETPGVPIAYTTNFLKDNELAVIKNNSEYIETTSKAYTDGKINIDHSGGYVAQFNISWDEINYDPEGNEIVQHKNWSENNKSKLAHFTSSIYLPGNARNINVYAKECTGLAWEWWRTVIDDRNLPLVKNRNISIWGTTLYPKYSNSVDNPIE.

A signal peptide spans 1–24 (MKKIMLVFITLILISLPIAQQTEA). The interval 35-54 (SISSMAPPASPPASPKTPIE) is disordered. A run of 4 beta stranded transmembrane segments spans residues 214-227 (ESQLIAKFGTAFKA), 234-243 (VNFGAISEGK), 312-321 (STKVKAAFDA), and 329-341 (SGDVELTNIIKNS). Residues 483–493 (ECTGLAWEWWR) carry the Conserved undecapeptide motif. A Cholesterol binding motif is present at residues 515-516 (TL).

The protein belongs to the cholesterol-dependent cytolysin family. As to quaternary structure, homooligomeric pore complex of 35 to 50 subunits; when inserted in the host membrane.

It localises to the secreted. The protein localises to the host membrane. It is found in the host cell membrane. Its activity is regulated as follows. Activity of listeriolysin O is regulated on multiple levels. It should be high in the phagosome, thereby allowing escape of the bacteria from the phagosomal compartment. Then, once inside the host cytosol, the activity must be controlled to prevent lysis of the host plasma membrane and loss of the intracellular environment. A cholesterol-dependent toxin that causes cytolysis by forming pores in cholesterol containing host membranes. After binding to target membranes, the protein undergoes a major conformation change, leading to its insertion in the host membrane and formation of an oligomeric pore complex. Cholesterol is required for binding to host membranes, membrane insertion and pore formation; cholesterol binding is mediated by a Thr-Leu pair in the C-terminus. Acts as a major virulence factor required for the escape of bacteria from phagosomal vacuoles and entry into the host cytosol. Can be reversibly inactivated by oxidation. The sequence is that of Listeriolysin O (hly) from Listeria monocytogenes serotype 4a (strain HCC23).